The primary structure comprises 288 residues: tRNA pseudouridine synthase A (288 aa).

Residue Asp58 is the Nucleophile of the active site. Residue Tyr124 coordinates substrate.

The protein belongs to the tRNA pseudouridine synthase TruA family. Homodimer.

The catalysed reaction is uridine(38/39/40) in tRNA = pseudouridine(38/39/40) in tRNA. In terms of biological role, formation of pseudouridine at positions 38, 39 and 40 in the anticodon stem and loop of transfer RNAs. This chain is tRNA pseudouridine synthase A, found in Corynebacterium diphtheriae (strain ATCC 700971 / NCTC 13129 / Biotype gravis).